The chain runs to 1049 residues: FERM, ARHGEF and pleckstrin domain-containing protein 1 (1049 aa).

The tract at residues 1 to 37 (MGEIEQKPTPASRLGAPENSGISTLERGQKPPPTPSG) is disordered. Phosphoserine occurs at positions 20 and 23. Thr24 carries the phosphothreonine modification. Residues 40–320 (MTVKIQMLDD…EHHAFFRLFE (281 aa)) form the FERM domain. Ser340, Ser373, Ser389, Ser403, Ser427, Ser433, and Ser437 each carry phosphoserine. A disordered region spans residues 361–537 (FERKHSKIHS…TDDEEEGRRK (177 aa)). 2 stretches are compositionally biased toward polar residues: residues 371-395 (TRSLVSQPTAPNSEVPKQSPQSASL) and 402-412 (ESPSAQSCQQA). Positions 435–448 (SGSKAADGTAAAAP) are enriched in low complexity. Composition is skewed to polar residues over residues 473–492 (STGSLTGSPHLSELSINSQG) and 499–514 (VTLSPNLSPDNKQASP). Ser513 and Ser517 each carry phosphoserine. The DH domain occupies 543–734 (KAYYIAKEVS…TEMVAQLHGT (192 aa)). One can recognise a PH 1 domain in the interval 763–860 (EFIRLGSLSK…WLEDIQMAID (98 aa)). Phosphoserine occurs at positions 837, 876, and 882. The segment at 866–908 (NGPTPELLASSPPDNKSPDEATAADQESEDDLSASRTSLERQA) is disordered. Position 887 is a phosphothreonine (Thr887). Residues Ser893, Ser900, and Ser903 each carry the phosphoserine modification. The PH 2 domain occupies 936 to 1033 (ENQLSGNLLR…WMEVIRSATS (98 aa)).

In terms of assembly, interacts with CADM1. Interacts with RAC1. As to expression, detected in forbrain (at protein level).

It localises to the cell membrane. It is found in the synapse. The protein localises to the synaptosome. Its subcellular location is the cytoplasm. The protein resides in the cytosol. It localises to the cell projection. It is found in the filopodium. The protein localises to the dendrite. Its subcellular location is the dendritic spine. Functionally, may play a role in semaphorin signaling. Functions as a guanine nucleotide exchange factor for RAC1. Plays a role in the assembly and disassembly of dendritic filopodia, the formation of dendritic spines, regulation of dendrite length and ultimately the formation of synapses. This chain is FERM, ARHGEF and pleckstrin domain-containing protein 1 (Farp1), found in Rattus norvegicus (Rat).